Reading from the N-terminus, the 453-residue chain is uncharacterized protein (453 aa).

Residues C74, C80, C83, and C162 each contribute to the [4Fe-4S] cluster site. Positions 286, 315, 336, and 384 each coordinate S-adenosyl-L-methionine. C411 serves as the catalytic Nucleophile.

Belongs to the class I-like SAM-binding methyltransferase superfamily. RNA M5U methyltransferase family.

This is an uncharacterized protein from Staphylococcus aureus (strain COL).